We begin with the raw amino-acid sequence, 477 residues long: Glycogen synthase (477 aa).

Lysine 15 is a binding site for ADP-alpha-D-glucose.

This sequence belongs to the glycosyltransferase 1 family. Bacterial/plant glycogen synthase subfamily.

The catalysed reaction is [(1-&gt;4)-alpha-D-glucosyl](n) + ADP-alpha-D-glucose = [(1-&gt;4)-alpha-D-glucosyl](n+1) + ADP + H(+). The protein operates within glycan biosynthesis; glycogen biosynthesis. Its function is as follows. Synthesizes alpha-1,4-glucan chains using ADP-glucose. In Escherichia fergusonii (strain ATCC 35469 / DSM 13698 / CCUG 18766 / IAM 14443 / JCM 21226 / LMG 7866 / NBRC 102419 / NCTC 12128 / CDC 0568-73), this protein is Glycogen synthase.